A 110-amino-acid chain; its full sequence is Secreted RxLR effector protein 89 (110 aa).

The first 22 residues, 1-22 (MTSVVIVVSVAVLLGVLVITDS), serve as a signal peptide directing secretion. Asn29 is a glycosylation site (N-linked (GlcNAc...) asparagine). Residues 61–74 (RHLRTILQWWQERR) carry the RxLR-dEER motif.

It belongs to the RxLR effector family.

It localises to the secreted. It is found in the host nucleus. Its subcellular location is the host cytoplasm. Functionally, secreted effector that completely suppresses the host cell death induced by cell death-inducing proteins. The chain is Secreted RxLR effector protein 89 from Plasmopara viticola (Downy mildew of grapevine).